We begin with the raw amino-acid sequence, 150 residues long: Protein E6 (150 aa).

Zinc fingers lie at residues 31-67 (CVFC…CACC) and 104-140 (CYLC…CLHC).

The protein belongs to the papillomaviridae E6 protein family. In terms of assembly, forms homodimers. Interacts with ubiquitin-protein ligase UBE3A/E6-AP; this interaction stimulates UBE3A ubiquitin activity. Interacts with host TP53 and EP300; this interaction inhibits TP53 activity. Interacts with human ZYX.

It is found in the host cytoplasm. The protein localises to the host nucleus. In terms of biological role, plays a major role in the induction and maintenance of cellular transformation. E6 associates with host UBE3A/E6-AP ubiquitin-protein ligase and modulates its activity. Sequesters tumor suppressor TP53 in the host cytoplasm and modulates its activity by interacting with host EP300 that results in the reduction of TP53 acetylation and activation. In turn, apoptosis induced by DNA damage is inhibited. E6 also protects host keratinocytes from apoptosis by mediating the degradation of host BAK1. May also inhibit host immune response. This chain is Protein E6, found in Human papillomavirus type 6a.